A 70-amino-acid chain; its full sequence is Small ribosomal subunit protein bS21C (70 aa).

This sequence belongs to the bacterial ribosomal protein bS21 family.

The polypeptide is Small ribosomal subunit protein bS21C (Burkholderia pseudomallei (strain 1710b)).